Here is a 104-residue protein sequence, read N- to C-terminus: Large ribosomal subunit protein bL21 (104 aa).

It belongs to the bacterial ribosomal protein bL21 family. As to quaternary structure, part of the 50S ribosomal subunit. Contacts protein L20.

Functionally, this protein binds to 23S rRNA in the presence of protein L20. This is Large ribosomal subunit protein bL21 from Tropheryma whipplei (strain Twist) (Whipple's bacillus).